Here is a 116-residue protein sequence, read N- to C-terminus: MARVKGGTVTRARRKKWIKLAKGYFGHKSVGYKVAKQAVVKSWTYAFRDRKQVKRNFRKLWIARINAAVRPHGLSYSQFINGLKKAEVLINRKMLSELAINQPQTFEKLVKLVQGK.

Belongs to the bacterial ribosomal protein bL20 family.

Functionally, binds directly to 23S ribosomal RNA and is necessary for the in vitro assembly process of the 50S ribosomal subunit. It is not involved in the protein synthesizing functions of that subunit. This Mycoplasmopsis synoviae (strain 53) (Mycoplasma synoviae) protein is Large ribosomal subunit protein bL20.